The primary structure comprises 395 residues: S-adenosylmethionine synthase (395 aa).

His-18 lines the ATP pocket. Asp-20 is a Mg(2+) binding site. Residue Glu-46 participates in K(+) binding. Residues Glu-59 and Gln-103 each contribute to the L-methionine site. Positions 103-113 are flexible loop; that stretch reads QSADIAVGVDS. ATP-binding positions include 170–172, Asp-244, 250–251, Ala-267, and Lys-271; these read DAK and RK. Asp-244 lines the L-methionine pocket. Lys-275 is an L-methionine binding site.

This sequence belongs to the AdoMet synthase family. Homotetramer; dimer of dimers. It depends on Mg(2+) as a cofactor. The cofactor is K(+).

Its subcellular location is the cytoplasm. The catalysed reaction is L-methionine + ATP + H2O = S-adenosyl-L-methionine + phosphate + diphosphate. Its pathway is amino-acid biosynthesis; S-adenosyl-L-methionine biosynthesis; S-adenosyl-L-methionine from L-methionine: step 1/1. In terms of biological role, catalyzes the formation of S-adenosylmethionine (AdoMet) from methionine and ATP. The overall synthetic reaction is composed of two sequential steps, AdoMet formation and the subsequent tripolyphosphate hydrolysis which occurs prior to release of AdoMet from the enzyme. This Gluconacetobacter diazotrophicus (strain ATCC 49037 / DSM 5601 / CCUG 37298 / CIP 103539 / LMG 7603 / PAl5) protein is S-adenosylmethionine synthase.